A 175-amino-acid chain; its full sequence is Myosin regulatory light chain 2, atrial isoform (175 aa).

The residue at position 2 (A2) is an N-acetylalanine. Residues S22 and S23 each carry the phosphoserine modification. 3 EF-hand domains span residues 32–67 (AQIQEFKEAFSCIDQNRDGIICKADLRETYSQLGKV), 102–137 (DPEEAILSAFRMFDPSGKGVVNKDEFKQLLLTQADK), and 138–173 (FSPAEVEQMFALTPMDLAGNIDYKSLCYIITHGDEK). Residues D45, N47, D49, and D56 each coordinate Ca(2+).

As to quaternary structure, myosin is a hexamer of 2 heavy chains and 4 light chains. In terms of tissue distribution, predominantly expressed in adult atrial muscle.

The polypeptide is Myosin regulatory light chain 2, atrial isoform (MYL7) (Homo sapiens (Human)).